Reading from the N-terminus, the 109-residue chain is Guanylate cyclase activator 2B (109 aa).

Positions Met1–Ser23 are cleaved as a signal peptide. Positions Val24–Ser94 are excised as a propeptide. 3 disulfide bridges follow: Cys65-Cys78, Cys98-Cys106, and Cys101-Cys109.

Belongs to the guanylin family. In terms of tissue distribution, small and large intestine and atria and ventricles of heart. Both uroguanylin and prouroguanylin are found in plasma.

Its subcellular location is the secreted. In terms of biological role, endogenous activator of intestinal guanylate cyclase. It stimulates this enzyme through the same receptor binding region as the heat-stable enterotoxins. May be a potent physiological regulator of intestinal fluid and electrolyte transport. May be an autocrine/paracrine regulator of intestinal salt and water transport. This is Guanylate cyclase activator 2B (GUCA2B) from Didelphis virginiana (North American opossum).